Reading from the N-terminus, the 302-residue chain is uncharacterized protein (302 aa).

Helical transmembrane passes span 1–21 (MSWIIFYTIIFALLVLDLGVI), 33–53 (SLLFSLFYFTISCLFGIYIYY), 67–87 (FLIEKAMSLDNIFVISIIFQF), 101–121 (FGIIGVIAFRAVMIYGGIILI), 124–144 (FSWLLYIFAVILIATGVKTFY), 185–205 (YVTPLFISLILIEAIDLVFAI), 220–240 (IIYTSNIFAILGLRALFFCLA), 253–273 (LALILIFIGIKIFIHHYIAIP), and 274–294 (AYISLTVTITLLLLGIFASVI).

This sequence belongs to the TerC family.

It is found in the cell membrane. This is an uncharacterized protein from Rickettsia bellii (strain RML369-C).